The primary structure comprises 138 residues: PilB-specific inhibitory protein CpiA (138 aa).

Interacts with PilB but not with TfpB.

Its function is as follows. Acts as a PilB inhibitor to control natural transformation. Inhibits type IV pili (T4P) extension by specifically binding and inhibiting the pilus extension ATPase PilB but not TfpB. This activity probably modulates T4P extension under different environmental conditions. This is PilB-specific inhibitory protein CpiA from Acinetobacter baylyi (strain ATCC 33305 / BD413 / ADP1).